Consider the following 302-residue polypeptide: L-threonate dehydrogenase (302 aa).

Residues 7–35 (FHVGIVGLGSMGMGAALSCVRAGLSTWGA) and Thr102 contribute to the NAD(+) site. The active site involves Lys178. Lys246 is an NAD(+) binding site.

It belongs to the HIBADH-related family. L-threonate dehydrogenase subfamily.

It carries out the reaction L-threonate + NAD(+) = 2-dehydro-L-erythronate + NADH + H(+). Functionally, catalyzes oxidation of L-threonate to 2-oxo-tetronate. Can use either NAD(+) or NADP(+) as cosubstrate, with a preference for NAD(+). The sequence is that of L-threonate dehydrogenase from Escherichia coli O6:H1 (strain CFT073 / ATCC 700928 / UPEC).